The sequence spans 337 residues: tRNA N6-adenosine threonylcarbamoyltransferase (337 aa).

Positions 111 and 115 each coordinate Fe cation. Residues 134-138 (LVSGG), Asp167, Gly180, and Asn272 contribute to the substrate site. Asp300 is a binding site for Fe cation.

The protein belongs to the KAE1 / TsaD family. Fe(2+) serves as cofactor.

The protein resides in the cytoplasm. It carries out the reaction L-threonylcarbamoyladenylate + adenosine(37) in tRNA = N(6)-L-threonylcarbamoyladenosine(37) in tRNA + AMP + H(+). In terms of biological role, required for the formation of a threonylcarbamoyl group on adenosine at position 37 (t(6)A37) in tRNAs that read codons beginning with adenine. Is involved in the transfer of the threonylcarbamoyl moiety of threonylcarbamoyl-AMP (TC-AMP) to the N6 group of A37, together with TsaE and TsaB. TsaD likely plays a direct catalytic role in this reaction. The sequence is that of tRNA N6-adenosine threonylcarbamoyltransferase from Cronobacter sakazakii (strain ATCC BAA-894) (Enterobacter sakazakii).